We begin with the raw amino-acid sequence, 1467 residues long: Helicase ARIP4 (1467 aa).

Disordered stretches follow at residues 1–150 (MSDE…YAAP) and 186–234 (DSSS…GGTH). A compositionally biased stretch (acidic residues) spans 11–49 (PDLDPDVELEDAEEEEEEEEVAVEECDRDDEEDLLDDPS). Positions 72 to 82 (TSTTSSQSEPS) are enriched in low complexity. A compositionally biased stretch (basic residues) spans 100-115 (KKRAQKPSHMRRNIRK). Glycyl lysine isopeptide (Lys-Gly) (interchain with G-Cter in SUMO2) cross-links involve residues Lys115 and Lys127. 2 stretches are compositionally biased toward basic and acidic residues: residues 133-147 (ELER…RKDY) and 192-201 (EDEKSSRDEV). Lys272 is covalently cross-linked (Glycyl lysine isopeptide (Lys-Gly) (interchain with G-Cter in SUMO2)). In terms of domain architecture, Helicase ATP-binding spans 292-512 (RFKTSSGFGC…WCMVDFVRPD (221 aa)). Residue 305–312 (HSMGLGKT) participates in ATP binding. The DEAH box motif lies at 463 to 466 (DEGH). The short motif at 551–555 (LHSLL) is the LXXLL motif 1 element. The disordered stretch occupies residues 649–673 (GSAGTSARCPPQGTKGKGEDSTLAS). Glycyl lysine isopeptide (Lys-Gly) (interchain with G-Cter in SUMO2) cross-links involve residues Lys665, Lys682, Lys759, Lys901, Lys1014, and Lys1018. The Helicase C-terminal domain occupies 728 to 896 (HLIEESVKLG…RVVDDLNPML (169 aa)). A disordered region spans residues 1120–1171 (RATGKPKVPEDGRMAASGSQGPSCESTSNGRHSASSPKAPDPEGLARPVSPD). The span at 1136-1155 (SGSQGPSCESTSNGRHSASS) shows a compositional bias: polar residues. Phosphoserine occurs at positions 1169 and 1172. Disordered regions lie at residues 1184–1221 (DVAA…TALG) and 1247–1284 (PVLD…VQPY). Residue Thr1260 is modified to Phosphothreonine. Residues 1329 to 1333 (LSNLL) carry the LXXLL motif 2 motif. A disordered region spans residues 1445–1467 (AEVGFSSNDDEDKDDDVIEVTGK). Residues 1452–1467 (NDDEDKDDDVIEVTGK) show a composition bias toward acidic residues.

The protein belongs to the SNF2/RAD54 helicase family. As to quaternary structure, interacts with AR via its N-terminus. Interacts with DYRK1A. Binds DNA and mononucleosomes, but does not seem to form large multiprotein complexes. Post-translationally, sumoylated.

It is found in the nucleus. The catalysed reaction is ATP + H2O = ADP + phosphate + H(+). Enzyme activity is enhanced by dsDNA (double-stranded DNA) and ssDNA (single-stranded DNA). DNA helicase that modulates androgen receptor (AR)-dependent transactivation in a promoter-dependent manner. Not able to remodel mononucleosomes in vitro. The chain is Helicase ARIP4 (RAD54L2) from Homo sapiens (Human).